A 709-amino-acid polypeptide reads, in one-letter code: Polyribonucleotide nucleotidyltransferase (709 aa).

Asp487 and Asp493 together coordinate Mg(2+). One can recognise a KH domain in the interval 554-613 (PRIHTMKISVEKIKDVIGKGGAVIRQLTEETGTTIEIEDDGTIKIAATDGDQAKEAIRRI). In terms of domain architecture, S1 motif spans 623-691 (GVIYTGKVAR…RQGRVRLSMK (69 aa)).

This sequence belongs to the polyribonucleotide nucleotidyltransferase family. As to quaternary structure, component of the RNA degradosome, which is a multiprotein complex involved in RNA processing and mRNA degradation. Mg(2+) is required as a cofactor.

It is found in the cytoplasm. The enzyme catalyses RNA(n+1) + phosphate = RNA(n) + a ribonucleoside 5'-diphosphate. Its function is as follows. Involved in mRNA degradation. Catalyzes the phosphorolysis of single-stranded polyribonucleotides processively in the 3'- to 5'-direction. The sequence is that of Polyribonucleotide nucleotidyltransferase from Vibrio cholerae serotype O1 (strain ATCC 39315 / El Tor Inaba N16961).